The following is a 154-amino-acid chain: 3-hydroxyacyl-[acyl-carrier-protein] dehydratase FabZ (154 aa).

Residue His58 is part of the active site.

This sequence belongs to the thioester dehydratase family. FabZ subfamily.

The protein localises to the cytoplasm. The catalysed reaction is a (3R)-hydroxyacyl-[ACP] = a (2E)-enoyl-[ACP] + H2O. Involved in unsaturated fatty acids biosynthesis. Catalyzes the dehydration of short chain beta-hydroxyacyl-ACPs and long chain saturated and unsaturated beta-hydroxyacyl-ACPs. The polypeptide is 3-hydroxyacyl-[acyl-carrier-protein] dehydratase FabZ (Protochlamydia amoebophila (strain UWE25)).